Reading from the N-terminus, the 406-residue chain is Argininosuccinate synthase (406 aa).

ATP is bound by residues 10 to 18 (AYSGGLDTS) and A37. Y88 and S93 together coordinate L-citrulline. G118 contributes to the ATP binding site. L-aspartate contacts are provided by T120, N124, and D125. N124 serves as a coordination point for L-citrulline. The L-citrulline site is built by R128, S179, S188, E264, and Y276.

This sequence belongs to the argininosuccinate synthase family. Type 1 subfamily. As to quaternary structure, homotetramer.

It localises to the cytoplasm. The enzyme catalyses L-citrulline + L-aspartate + ATP = 2-(N(omega)-L-arginino)succinate + AMP + diphosphate + H(+). It functions in the pathway amino-acid biosynthesis; L-arginine biosynthesis; L-arginine from L-ornithine and carbamoyl phosphate: step 2/3. In Roseobacter denitrificans (strain ATCC 33942 / OCh 114) (Erythrobacter sp. (strain OCh 114)), this protein is Argininosuccinate synthase.